The chain runs to 343 residues: Lipopolysaccharide core biosynthesis glycosyltransferase LpsD (343 aa).

It belongs to the glycosyltransferase group 1 family. Glycosyltransferase 4 subfamily.

The protein operates within bacterial outer membrane biogenesis; LPS core biosynthesis. This Rhizobium meliloti (strain 1021) (Ensifer meliloti) protein is Lipopolysaccharide core biosynthesis glycosyltransferase LpsD (lpsD).